The following is a 47-amino-acid chain: PhoP/PhoQ regulator MgrB (47 aa).

The helical transmembrane segment at 6-26 threads the bilayer; sequence WVALVVVVLACLLLWAQVFNM.

The protein belongs to the MgrB family. In terms of assembly, may form homooligomers. Probably interacts with the periplasmic domain of PhoQ.

The protein resides in the cell inner membrane. In terms of biological role, phoP-regulated transcription is redox-sensitive, being activated when the periplasm becomes more reducing. MgrB acts between DsbA/DsbB and PhoP/PhoQ in this pathway. Represses PhoP/PhoQ signaling, possibly by binding to the periplasmic domain of PhoQ, altering its activity and that of downstream effector PhoP. This is PhoP/PhoQ regulator MgrB from Escherichia coli O1:K1 / APEC.